A 423-amino-acid chain; its full sequence is MPRRIPWIIKYRPKKIADVVNQDSAKKQFIQWLESWLKGKPSKKAALLYGPAGCGKTSLVEAAANEYGLEIVEMNASDFRRRQDIERIAKTAAFMRSLFARGKIILLDEVDGISGTADRGAIDAILHLLEITRYPVVMTANNPWDQKLKPLRDASLMIAFKRLSERDVIIVLKRICQLEKLECEDAALREIARRSEGDLRSAINDLQAIAEGFGRVTLNWVRELSAYRTREYAPFEALQKMFNARYIFQAKSAISQANIDYETMMIWINEHIPTYYDDPEEIWRAYEALSRADVYMGRIRKSGSWDLLSYVFDMMGPGVAFARKIYRYKWKAFRSPKRLQLLAQTKRSREVREGIAMTLAPRLLTSRATIKRDVIPFLKIIFTHAPKYAAKIALGYGLTEEMIKWLAGPKSSEVLAYYRRLKR.

An ATP-binding site is contributed by 50 to 57 (GPAGCGKT).

It belongs to the activator 1 small subunits family. RfcL subfamily. As to quaternary structure, heteromultimer composed of small subunits (RfcS) and large subunits (RfcL).

Part of the RFC clamp loader complex which loads the PCNA sliding clamp onto DNA. In Staphylothermus marinus (strain ATCC 43588 / DSM 3639 / JCM 9404 / F1), this protein is Replication factor C large subunit.